The sequence spans 399 residues: PCI domain-containing protein 2 (399 aa).

The PCI domain occupies Val210–Pro391.

It belongs to the CSN12 family.

The polypeptide is PCI domain-containing protein 2 (pcid2) (Danio rerio (Zebrafish)).